Reading from the N-terminus, the 198-residue chain is Fimbriae W protein (198 aa).

The region spanning 127–192 (HYCTTRHFSV…QFLKYIRVNL (66 aa)) is the HTH luxR-type domain.

It is found in the fimbrium. This is Fimbriae W protein (fimW) from Salmonella typhimurium (strain LT2 / SGSC1412 / ATCC 700720).